A 389-amino-acid chain; its full sequence is MSSEFISKVDKEARRKAANILRDKFLNLVEQLKKGEPLVMEIPMRTLSNAIYDEKRKLLLLGEKKLRRNFLDLNEAKRFMQTVLMASIIYDALVSDEYPTIRDLYYRGKHSLLLKSIEGNKIVSEENTWDEQKESDSVIVDIEVFTSLLREEMLILSKEKGKVVGNLRIRSGNDVIDLSKTGHGAYAIEPTPDLIDFIDVDAEFVLVVEKDAVFQQLHRAGFWKQYKSILITSAGQPDRATRRFVRRLNEELKLPVYILTDADPYGWYIFSVFRIGSISLSYESERLATPDAKFLGVSMGDIFGNSRKKPYLSEAERKNYIIKAKDADIKRAEEIKNYEWFKTKAWQEEINTFLQRKAKLEIEAMASKGLKFLAFQYIPEKITNKDYIA.

The region spanning 12-162 (EARRKAANIL…MLILSKEKGK (151 aa)) is the Topo IIA-type catalytic domain. Residue tyrosine 106 is the O-(5'-phospho-DNA)-tyrosine intermediate of the active site. Residues glutamate 209 and aspartate 261 each coordinate Mg(2+).

It belongs to the TOP6A family. In terms of assembly, homodimer. Heterotetramer of two Top6A and two Top6B chains. Requires Mg(2+) as cofactor.

The enzyme catalyses ATP-dependent breakage, passage and rejoining of double-stranded DNA.. Not inhibited by the DNA gyrase inhibitor novobiocin, instead inhibited by eukaryotic topoisomerase inhibitors such as m- and o-amsacrine, ellipticine, and the quinolone CP-115,953. In terms of biological role, relaxes both positive and negative supercoils and exhibits a strong decatenase and unknotting activity; it cannot introduce DNA supercoils. ATP is absolutely required for DNA cleavage; the nonhydrolyzable analog AMP-PNP generates nicked or linear products from a supercoiled dsDNA substrate. Generates staggered two-nucleotide long 5' overhangs. The enzyme is covalently attached transiently to the 5'-ends of the cleaved strands. This Saccharolobus shibatae (strain ATCC 51178 / DSM 5389 / JCM 8931 / NBRC 15437 / B12) (Sulfolobus shibatae) protein is Type 2 DNA topoisomerase 6 subunit A.